A 506-amino-acid chain; its full sequence is Pleckstrin homology domain-containing family D member 1 (506 aa).

In terms of domain architecture, PH spans 28–136 (KVQLYGVLWK…WLEMLQESGK (109 aa)). The stretch at 146–391 (EAMIKSLEAQ…KVRNKEKEER (246 aa)) forms a coiled coil. At Arg-503 the chain carries Omega-N-methylarginine.

The protein belongs to the PLEKHD1 family.

The polypeptide is Pleckstrin homology domain-containing family D member 1 (PLEKHD1) (Homo sapiens (Human)).